A 328-amino-acid chain; its full sequence is MLGKEWENTSFAEIGLLHQAPNDNDLEKFQHALTLMSEADNSSDLLIPLISDFLIWFYYQKTPLKWIPFLGHFFNTWQSCSFPPRRYLLAKILSGRISELLKVSPFELAASVTSQDVVEADSLVEENELQAWLEKQELVPSSSNFLNSFWISGGERELTEEEQNSLLQSNTTYTNSDLPASKQLESFISMNLSYSKVFFLHLLQHSDSSFNDKFLLLLANIPVTVSNVEVLLYLLQQEESLAQFDLNGKSFLYHMLVSLHNQVTNTSHLEKQRISTVATLFISKLFEIPSLSEYLSSTLFLDLQAFCIVALPQSAKLFQKVKALKNNP.

This is an uncharacterized protein from Schizosaccharomyces pombe (strain 972 / ATCC 24843) (Fission yeast).